A 157-amino-acid polypeptide reads, in one-letter code: Probable chemoreceptor glutamine deamidase CheD (157 aa).

It belongs to the CheD family.

It carries out the reaction L-glutaminyl-[protein] + H2O = L-glutamyl-[protein] + NH4(+). In terms of biological role, probably deamidates glutamine residues to glutamate on methyl-accepting chemotaxis receptors (MCPs), playing an important role in chemotaxis. The chain is Probable chemoreceptor glutamine deamidase CheD from Archaeoglobus fulgidus (strain ATCC 49558 / DSM 4304 / JCM 9628 / NBRC 100126 / VC-16).